The primary structure comprises 352 residues: Cyclin-dependent kinase-like 1 (352 aa).

The region spanning 4–287 is the Protein kinase domain; sequence YEKIGKIGEG…CEQLLQHPYF (284 aa). Residues 10–18 and Lys33 contribute to the ATP site; that span reads IGEGSYGVV. The short motif at 45 to 51 is the [NKR]KIAxRE element; the sequence is KKIALRE. Residue Asp126 is the Proton acceptor of the active site.

The protein belongs to the protein kinase superfamily. CMGC Ser/Thr protein kinase family. CDC2/CDKX subfamily.

It is found in the cytoplasm. It localises to the nucleus. The enzyme catalyses L-seryl-[protein] + ATP = O-phospho-L-seryl-[protein] + ADP + H(+). It catalyses the reaction L-threonyl-[protein] + ATP = O-phospho-L-threonyl-[protein] + ADP + H(+). The sequence is that of Cyclin-dependent kinase-like 1 from Mus musculus (Mouse).